We begin with the raw amino-acid sequence, 129 residues long: DNA base-flipping protein (129 aa).

The protein belongs to the MGMT family. ATL subfamily. As to quaternary structure, interacts with HelD and UvrA.

Its function is as follows. Involved in DNA damage recognition. Binds DNA containing O(6)-methylguanine and larger O(6)-alkylguanine adducts, and to double-stranded DNA that contains an AP (apurinic/apyrimidinic) site. Binds to the damaged base and flips the base out of the DNA duplex into an extrahelical conformation, which allows processing by repair proteins. Works in partnership with the nucleotide excision repair (NER) pathway to enhance the repair of the O(6)-alkylguanine adducts larger than the methyl adduct. Also prevents methyl-directed mismatch repair (MMR)-mediated attack of the O(6)-alkylguanine:T mispairs for the larger alkyl groups. The polypeptide is DNA base-flipping protein (Escherichia coli (strain K12)).